Reading from the N-terminus, the 233-residue chain is Lipid A 4'-phosphatase (233 aa).

Position 1 (methionine 1) is a topological domain, cytoplasmic. The chain crosses the membrane as a helical span at residues 2–22 (LLFWMWWALLAVFRAFPGIDI). Topologically, residues 23-60 (YFSQLFFVGADCDATAAAGNICGGFPYRDVAAFDLLRT) are extracellular. A helical membrane pass occupies residues 61–81 (VFFRLPYVVAIVMVWKLVECY). Topologically, residues 82–94 (QQHGATFNAERAQ) are cytoplasmic. A helical membrane pass occupies residues 95 to 115 (KLKVALGTLLIGPVLLVNVVL). Residues 116–149 (KEHWGRPRPIQTDIFGGALHFAEAGSLAGKCVSN) are Extracellular-facing. The chain crosses the membrane as a helical span at residues 150–170 (CSFVSGEAASAGWLFCLLLFV). Over 171–176 (PKSLRY) the chain is Cytoplasmic. The helical transmembrane segment at 177–197 (AVAAPLAAISILTPAMRLSFG) threads the bilayer. Residues 198 to 200 (AHY) lie on the Extracellular side of the membrane. The chain crosses the membrane as a helical span at residues 201–221 (LSDVVLGWLSSLVVFAALLAL). The Cytoplasmic segment spans residues 222–233 (TESQQHQKNSEI).

This sequence belongs to the lipid A LpxF 4'-phosphatase family.

It is found in the cell inner membrane. It functions in the pathway bacterial outer membrane biogenesis; LPS lipid A biosynthesis. In terms of biological role, removes the 4'-phosphate moiety from lipid IV(A) (a tetraacylated precursor of lipid A). The chain is Lipid A 4'-phosphatase from Rhizobium leguminosarum.